Consider the following 179-residue polypeptide: Large ribosomal subunit protein uL6 (179 aa).

Residues 154–169 (EPYKGKGVKYEHEQIR) show a composition bias toward basic and acidic residues. The tract at residues 154-179 (EPYKGKGVKYEHEQIRRKAGKSGGKK) is disordered. Basic residues predominate over residues 170–179 (RKAGKSGGKK).

The protein belongs to the universal ribosomal protein uL6 family. Part of the 50S ribosomal subunit.

Its function is as follows. This protein binds to the 23S rRNA, and is important in its secondary structure. It is located near the subunit interface in the base of the L7/L12 stalk, and near the tRNA binding site of the peptidyltransferase center. The sequence is that of Large ribosomal subunit protein uL6 from Oleidesulfovibrio alaskensis (strain ATCC BAA-1058 / DSM 17464 / G20) (Desulfovibrio alaskensis).